Reading from the N-terminus, the 376-residue chain is METLANRLDACQDKMLELYEKDSDKLEDQITHWHLLRVENALLYKARECGLTHIGHQVVPPLSVTKAKARNAIEVHVALQQLQESAYAHEPWTLRDTSREMWDTAPKGCWKKRGITVEVRYDGDESKAMCYVQWRELYVQNYSDDRWVKVPGKVSYEGLYYTHENMNIYYVNFKDDACVYGETGKWEVHVGGKVIHHDAFDPVSSTREISTPGPVCTSNTTPASTQAQVGASEGPEQKRQRLEAVDGQHQQQRQGSKDSTQKAAERAGGQVDSDRTRLCDTRSAHPVRHPSDPDCAPVIHLRGDPNSLKCFRYRLHHGKRKLYSRSSSTWRWSCESENQAAFVTLWYTSDTQRTEFLNVVKVPPGIQVILGYMSIF.

The interval 1–206 is transactivation domain; sequence METLANRLDA…HDAFDPVSST (206 aa). Positions 204-277 are disordered; that stretch reads SSTREISTPG…GGQVDSDRTR (74 aa). The span at 216 to 229 shows a compositional bias: polar residues; the sequence is CTSNTTPASTQAQV. Composition is skewed to basic and acidic residues over residues 235-246 and 255-265; these read PEQKRQRLEAVD and GSKDSTQKAAE. Positions 295–376 are DNA-binding domain; it reads CAPVIHLRGD…QVILGYMSIF (82 aa).

Belongs to the papillomaviridae E2 protein family. Binds DNA as homodimer. Interacts with protein E1; this interaction greatly increases E1 DNA-binding activity. Interacts with protein L1; this interaction enhances E2-dependent replication and transcription activation. Interacts with protein L2; this interaction inhibits E2 transcriptional activity but not DNA replication function E2. Interacts with protein E7; this interaction inhibits E7 oncogenic activity. Interacts with host TAF1; this interaction modulates E2-dependent transcriptional regulation. Interacts with host BRD4; this interaction mediates E2 transcriptional activation function. Additionally, the interaction with host BRD4 on mitotic chromosomes mediates tethering of the viral genome. Interacts with host TOPBP1; this interaction is required for optimal viral DNA replication. Phosphorylated.

It is found in the host nucleus. Plays a role in the initiation of viral DNA replication. A dimer of E2 interacts with a dimer of E1 in order to improve specificity of E1 DNA binding activity. Once the complex recognizes and binds DNA at specific sites, the E2 dimer is removed from DNA. E2 also regulates viral transcription through binding to the E2RE response element (5'-ACCNNNNNNGGT-3') present in multiple copies in the regulatory regions of the viral genome. Activates or represses transcription depending on E2RE's position with regards to proximal promoter elements including the TATA-box. Repression occurs by sterically hindering the assembly of the transcription initiation complex. The polypeptide is Regulatory protein E2 (Human papillomavirus type 10).